Here is a 292-residue protein sequence, read N- to C-terminus: Syntaxin-19 (292 aa).

Positions 1-24 are enriched in basic and acidic residues; the sequence is MKDRLPELKQRTKETELSKDKDVP. Positions 1–28 are disordered; sequence MKDRLPELKQRTKETELSKDKDVPTTEA. A coiled-coil region spans residues 46–122; that stretch reads VAERHLHEIQ…VKEVKKSEDE (77 aa). In terms of domain architecture, t-SNARE coiled-coil homology spans 209 to 271; it reads LSEIEQRHKE…NTTKEKFGLA (63 aa).

Belongs to the syntaxin family. Interacts with EGFR.

It is found in the cell membrane. Its subcellular location is the cytoplasm. Functionally, plays a role in endosomal trafficking of the epidermal growth factor receptor (EGFR). This is Syntaxin-19 (STX19) from Bos taurus (Bovine).